The sequence spans 247 residues: NAD(P)H-quinone oxidoreductase subunit K (247 aa).

Residues cysteine 63, cysteine 64, cysteine 128, and cysteine 159 each contribute to the [4Fe-4S] cluster site. The tract at residues 218-247 (TRQAPPKELTEAIGMEVPPALASQKQKEEA) is disordered.

It belongs to the complex I 20 kDa subunit family. In terms of assembly, NDH-1 can be composed of about 15 different subunits; different subcomplexes with different compositions have been identified which probably have different functions. [4Fe-4S] cluster is required as a cofactor.

The protein localises to the cellular thylakoid membrane. The enzyme catalyses a plastoquinone + NADH + (n+1) H(+)(in) = a plastoquinol + NAD(+) + n H(+)(out). It carries out the reaction a plastoquinone + NADPH + (n+1) H(+)(in) = a plastoquinol + NADP(+) + n H(+)(out). NDH-1 shuttles electrons from an unknown electron donor, via FMN and iron-sulfur (Fe-S) centers, to quinones in the respiratory and/or the photosynthetic chain. The immediate electron acceptor for the enzyme in this species is believed to be plastoquinone. Couples the redox reaction to proton translocation, and thus conserves the redox energy in a proton gradient. Cyanobacterial NDH-1 also plays a role in inorganic carbon-concentration. This chain is NAD(P)H-quinone oxidoreductase subunit K, found in Crocosphaera subtropica (strain ATCC 51142 / BH68) (Cyanothece sp. (strain ATCC 51142)).